A 397-amino-acid polypeptide reads, in one-letter code: Tryptophan synthase beta chain (397 aa).

An N6-(pyridoxal phosphate)lysine modification is found at Lys-87.

This sequence belongs to the TrpB family. Tetramer of two alpha and two beta chains. Pyridoxal 5'-phosphate serves as cofactor.

The enzyme catalyses (1S,2R)-1-C-(indol-3-yl)glycerol 3-phosphate + L-serine = D-glyceraldehyde 3-phosphate + L-tryptophan + H2O. It functions in the pathway amino-acid biosynthesis; L-tryptophan biosynthesis; L-tryptophan from chorismate: step 5/5. In terms of biological role, the beta subunit is responsible for the synthesis of L-tryptophan from indole and L-serine. The protein is Tryptophan synthase beta chain of Klebsiella pneumoniae (strain 342).